Consider the following 263-residue polypeptide: Taurine import ATP-binding protein TauB (263 aa).

In terms of domain architecture, ABC transporter spans 4-235; the sequence is LTAEAISLSF…RYAAGETVRS (232 aa). 40 to 47 lines the ATP pocket; it reads GPSGCGKS.

Belongs to the ABC transporter superfamily. Taurine importer (TC 3.A.1.17.1) family. As to quaternary structure, the complex is composed of two ATP-binding proteins (TauB), two transmembrane proteins (TauC) and a solute-binding protein (TauA).

It localises to the cell inner membrane. It carries out the reaction taurine(out) + ATP + H2O = taurine(in) + ADP + phosphate + H(+). In terms of biological role, part of the ABC transporter complex TauABC involved in taurine import. Responsible for energy coupling to the transport system. The chain is Taurine import ATP-binding protein TauB from Pseudomonas aeruginosa (strain UCBPP-PA14).